The primary structure comprises 351 residues: MFTKTFSNNYMTSSQSAYCNLQQYHDSRVCLLKCCRVQKVDPYFPRIALNSATSYPTVSGTVSLPKAETVEPDLWIKSFKGNEDPLLSDGSHTGVNQLGGVFVNGRPLPDTIRAQIVEMSQHGTRPCDISRQLKVSHGCVSKILGRYYSTGSVRPGVIGGSKPKVATPRVVECIAGYKRANPTMFAWEIRQKLIEDQICGEENVPSVSSINRIVRNKSFMAQLATPTSVTPSVARPSSATSQNQRSPPRGVQQHMQQSTSVQQLQQFQLTSAATVNSLISRPAFAIPGTTHSINGLLGTFPHSSLLDDKFTNLSTHSADMSLVYPTGLVGEHDWAMRTPMVILPQNYCGQL.

A DNA-binding region (paired) is located at residues 91 to 217; that stretch reads SHTGVNQLGG…SSINRIVRNK (127 aa). The PAI subdomain stretch occupies residues 94–150; the sequence is GVNQLGGVFVNGRPLPDTIRAQIVEMSQHGTRPCDISRQLKVSHGCVSKILGRYYST. Positions 169–217 are RED subdomain; that stretch reads RVVECIAGYKRANPTMFAWEIRQKLIEDQICGEENVPSVSSINRIVRNK. The segment covering 226–246 has biased composition (polar residues); that stretch reads PTSVTPSVARPSSATSQNQRS. The interval 226–258 is disordered; it reads PTSVTPSVARPSSATSQNQRSPPRGVQQHMQQS.

The protein localises to the nucleus. It localises to the chromosome. Transcription factor. Involved in negatively modulating apoptosis in germline and somatic cells, acting in partial redundancy with transcription factor egl-38/PAX5, probably by directly regulating transcription of apoptosis regulator ced-9. May bind to the DNA sequence motif 5'-GTAACG-3' in regulatory elements. The chain is Paired box protein 2 homolog from Caenorhabditis elegans.